A 420-amino-acid polypeptide reads, in one-letter code: L-rhamnose isomerase (420 aa).

Residues histidine 264, aspartate 296, and aspartate 298 each coordinate Mn(2+).

The protein belongs to the rhamnose isomerase family. It depends on Mn(2+) as a cofactor.

The protein localises to the cytoplasm. It catalyses the reaction L-rhamnopyranose = L-rhamnulose. It functions in the pathway carbohydrate degradation; L-rhamnose degradation; glycerone phosphate from L-rhamnose: step 1/3. In terms of biological role, catalyzes the interconversion of L-rhamnose and L-rhamnulose. This is L-rhamnose isomerase from Listeria monocytogenes serotype 4b (strain F2365).